The primary structure comprises 335 residues: tRNA N6-adenosine threonylcarbamoyltransferase (335 aa).

The Fe cation site is built by H111 and H115. Substrate contacts are provided by residues 133-137 (IISGG), D166, G179, D183, and N268. D296 provides a ligand contact to Fe cation.

This sequence belongs to the KAE1 / TsaD family. Fe(2+) is required as a cofactor.

The protein localises to the cytoplasm. The catalysed reaction is L-threonylcarbamoyladenylate + adenosine(37) in tRNA = N(6)-L-threonylcarbamoyladenosine(37) in tRNA + AMP + H(+). Its function is as follows. Required for the formation of a threonylcarbamoyl group on adenosine at position 37 (t(6)A37) in tRNAs that read codons beginning with adenine. Is involved in the transfer of the threonylcarbamoyl moiety of threonylcarbamoyl-AMP (TC-AMP) to the N6 group of A37, together with TsaE and TsaB. TsaD likely plays a direct catalytic role in this reaction. The sequence is that of tRNA N6-adenosine threonylcarbamoyltransferase from Aquifex aeolicus (strain VF5).